A 194-amino-acid polypeptide reads, in one-letter code: Type II secretion system protein H (194 aa).

The propeptide at 1 to 6 (MTATRG) is leader sequence. Phe7 is modified (N-methylphenylalanine). A helical membrane pass occupies residues 12–32 (ILLVLVLVSASAVAVIATFPV).

This sequence belongs to the GSP H family. Type II secretion is composed of four main components: the outer membrane complex, the inner membrane complex, the cytoplasmic secretion ATPase and the periplasm-spanning pseudopilus. Interacts with core component EpsG. Post-translationally, cleaved by prepilin peptidase. Methylated by prepilin peptidase at the amino group of the N-terminal phenylalanine once the leader sequence is cleaved by prepilin peptidase.

The protein resides in the cell inner membrane. Component of the type II secretion system required for the energy-dependent secretion of extracellular factors such as proteases and toxins from the periplasm. Part of the pseudopilus tip complex that is critical for the recognition and binding of secretion substrates. This is Type II secretion system protein H (epsH) from Vibrio cholerae serotype O1 (strain ATCC 39315 / El Tor Inaba N16961).